The sequence spans 960 residues: MRVPEKYSTLPAEDRSVHIVNICAIEDLGYLPSEGTLLNSLSVDPDAECKYGLYFRDGKRKVDYILVYHHKRASGSRTLARRGLQNDMVLGTRSVRQDQPLPGKGSPVDAGSPEVPMDYHEDDKRFRREEYEGNLLEAGLELENDEDTKIHGVGFVKIHAPWHVLCREAEFLKLKMPTKKVYHISETRGLLKTINSVLQKITDPIQPKVAEHRPQTTKRLSYPFSREKQHLFDLTDRDSFFDSKTRSTIVYEILKRTTCTKAKYSMGITSLLANGVYSAAYPLHDGDYEGDNVEFNDRKLLYEEWASYGVFYKYQPIDLVRKYFGEKVGLYFAWLGAYTQMLIPASIVGVIVFLYGCATVDENIPSMEMCDQRYNITMCPLCDKTCSYWKMSSACATARASHLFDNPATVFFSVFMALWAATFMEHWKRKQMRLNYRWDLTGFEEEEEAVKDHPRAEYEARVLEKSLRKESRNKETDKVKLTWRDRFPAYFTNLVSIIFMIAVTFAIVLGVIIYRISTAAALAMNSSPSVRSNIRVTVTATAVIINLVVIILLDEVYGCIARWLTKIEVPKTEKSFEERLTFKAFLLKFVNSYTPIFYVAFFKGRFVGRPGDYVYIFRSFRMEECAPGGCLMELCIQLSIIMLGKQLIQNNLFEIGIPKMKKFIRYLKLRRQSPSDREEYVKRKQRYEVDFNLEPFAGLTPEYMEMIIQFGFVTLFVASFPLAPLFALLNNIIEIRLDAKKFVTELRRPVAIRAKDIGIWYNILRGVGKLAVIINAFVISFTSDFIPRLVYLYMYSQNGTMHGFVNHTLSSFNVSDFQNGTAPNDPLDLGYEVQICRYKDYREPPWSEHKYDISKDFWAVLAARLAFVIVFQNLVMFMSDFVDWVIPDIPKDISQQIHKEKVLMVELFMREEQGKQQLLDTWMEKEKPRDVPCNNHSPTTHPEAGDGSPVPSYEYHGDAL.

Over 1–333 the chain is Cytoplasmic; the sequence is MRVPEKYSTL…FGEKVGLYFA (333 aa). Positions 92-115 are disordered; sequence TRSVRQDQPLPGKGSPVDAGSPEV. The residue at position 196 (S196) is a Phosphoserine. Residues 334 to 354 form a helical membrane-spanning segment; that stretch reads WLGAYTQMLIPASIVGVIVFL. Residues 355–406 lie on the Extracellular side of the membrane; the sequence is YGCATVDENIPSMEMCDQRYNITMCPLCDKTCSYWKMSSACATARASHLFDN. 4 cysteine pairs are disulfide-bonded: C370–C395, C379–C836, C382–C386, and C625–C630. A helical membrane pass occupies residues 407–427; that stretch reads PATVFFSVFMALWAATFMEHW. Ca(2+) is bound at residue E425. Topologically, residues 428–493 are cytoplasmic; that stretch reads KRKQMRLNYR…RDRFPAYFTN (66 aa). The helical transmembrane segment at 494–514 threads the bilayer; sequence LVSIIFMIAVTFAIVLGVIIY. The Extracellular segment spans residues 515 to 542; sequence RISTAAALAMNSSPSVRSNIRVTVTATA. Residues 543–563 form a helical membrane-spanning segment; that stretch reads VIINLVVIILLDEVYGCIARW. The Cytoplasmic segment spans residues 564–581; that stretch reads LTKIEVPKTEKSFEERLT. The chain crosses the membrane as a helical span at residues 582–602; sequence FKAFLLKFVNSYTPIFYVAFF. At 603-631 the chain is on the extracellular side; it reads KGRFVGRPGDYVYIFRSFRMEECAPGGCL. Residues 632 to 652 form a helical membrane-spanning segment; that stretch reads MELCIQLSIIMLGKQLIQNNL. 6 residues coordinate Ca(2+): N651, E654, E702, E705, E734, and D738. Topologically, residues 653-699 are cytoplasmic; it reads FEIGIPKMKKFIRYLKLRRQSPSDREEYVKRKQRYEVDFNLEPFAGL. Transmembrane regions (helical) follow at residues 700–720 and 721–741; these read TPEYMEMIIQFGFVTLFVASF and PLAPLFALLNNIIEIRLDAKK. Over 742 to 758 the chain is Cytoplasmic; it reads FVTELRRPVAIRAKDIG. Residues 759–779 form a helical membrane-spanning segment; it reads IWYNILRGVGKLAVIINAFVI. The Extracellular portion of the chain corresponds to 780 to 866; it reads SFTSDFIPRL…FWAVLAARLA (87 aa). N-linked (GlcNAc...) asparagine glycosylation is present at N806. The chain crosses the membrane as a helical span at residues 867–887; sequence FVIVFQNLVMFMSDFVDWVIP. D883 and D888 together coordinate Ca(2+). The Cytoplasmic segment spans residues 888-960; it reads DIPKDISQQI…PSYEYHGDAL (73 aa). Residues 928–960 form a disordered region; that stretch reads PRDVPCNNHSPTTHPEAGDGSPVPSYEYHGDAL.

The protein belongs to the anoctamin family. As to quaternary structure, homodimer. Interacts with CFTR. Interacts with TRPV4. As to expression, expressed at the apical surface of the vomeronasal epithelium (at protein level). Expressed in the lateral and septal nasal glands (at protein level). Highly expressed in pulmonary bronchiole epithelial cells, pancreatic and submandibular gland acinar cells, kidney proximal tubule, all retinal cell layers, most sensory cells of dorsal root ganglia, Leydig cells and spermatocytes (at protein level). In the dorsal root ganglia, detected in small-diameter nociceptive neurons and in larger myelinated neurons (at protein level). In the dorsal root ganglia, expressed in MrgprA3-positive neurons (at protein level). In the developing brain, highly expressed in the ventricular zone and subventricular zone at 12.5 dpc and 14.5 dpc where it is detected in radial glial cells but not in neurons with expression dramatically decreased at P1 (at protein level). Highly expressed in the endometrial stroma (at protein level). In taste buds of the vallate papillae, expressed in the apical region of type I taste cells (at protein level). In the kidney, expressed in the collecting duct (at protein level). In the retina, strongly expressed in the outer and inner plexiform layers, weakly expressed in some somata in the inner nuclear layer and ganglion cell layer and not expressed in the outer nuclear layer (at protein level). Expressed in various retinal neurons including rod bipolar cells (at protein level). Expressed in eye, brain, myometrium and endometrium with higher levels in endometrium than myometrium in estrus and day 18 pregnant mice. Not detected in uterine smooth muscle cells. Expressed at high levels in the thyroid gland and gastrointestinal muscles.

The protein localises to the apical cell membrane. It is found in the presynapse. The catalysed reaction is chloride(in) = chloride(out). Its activity is regulated as follows. ATP and calmodulin are essential for its activation. Channel activity is inhibited by CFTR protein and by chloride inhibitors such as niflumic acid (NFA) and 4,4'-diisothiocyanatostilbene-2,2'-disulfonic acid (DIDS). Activated by heat with activation seen at temperatures above 44 degrees Celsius. Activated by BDNF in radial glial cells. Its function is as follows. Calcium-activated chloride channel (CaCC). Plays a role in transepithelial anion transport and smooth muscle contraction. Required for the normal functioning of the interstitial cells of Cajal (ICCs) which generate electrical pacemaker activity in gastrointestinal smooth muscles. Acts as a major contributor to basal and stimulated chloride conductance in airway epithelial cells and plays an important role in tracheal cartilage development. Required for CFTR activation by enhancing endoplasmic reticulum Ca(2+) store release and is also required for CFTR membrane expression. Required for basal and ATP-dependent mucus secretion in airways and intestine, probably by controlling exocytosis of mucus-filled granules by providing Ca(2+) to an apical signaling compartment. Contributes to airway mucus expression induced by interleukins IL3 and IL8 and by the asthma-associated protein CLCA1 and is required for expression of mucin MUC5AC. However, was shown in another study not to be required for MUC5AC expression. Plays a role in the propagation of Ca(2+) waves in Kolliker's organ in the cochlea and contributes to the refinement of auditory brainstem circuitries prior to hearing onset. In vomeronasal sensory neurons, modulates spontaneous firing patterns in the absence of stimuli as well as the firing pattern of pheromone-evoked activity. Responsible for calcium-activated chloride channel activity in type I taste cells of the vallate papillae. Acts as a heat sensor in nociceptive neurons. In dorsal root ganglion neurons, plays a role in mediating non-histaminergic Mas-related G-protein coupled receptor (MRGPR)-dependent itching, acting as a downstream effector of MRGPRs. In the developing brain, required for the Ca(2+)-dependent process extension of radial glial cells. The sequence is that of Anoctamin-1 (Ano1) from Mus musculus (Mouse).